The sequence spans 442 residues: tRNA modification GTPase MnmE (442 aa).

Residues Arg21, Glu79, and Lys118 each contribute to the (6S)-5-formyl-5,6,7,8-tetrahydrofolate site. The region spanning Gly214–Asn367 is the TrmE-type G domain. Asn224 serves as a coordination point for K(+). GTP-binding positions include Asn224–Ser229, Ser243–Thr249, and Asp268–Gly271. Ser228 contributes to the Mg(2+) binding site. Residues Ser243, Ile245, and Thr248 each contribute to the K(+) site. A Mg(2+)-binding site is contributed by Thr249. Residue Lys442 participates in (6S)-5-formyl-5,6,7,8-tetrahydrofolate binding.

Belongs to the TRAFAC class TrmE-Era-EngA-EngB-Septin-like GTPase superfamily. TrmE GTPase family. Homodimer. Heterotetramer of two MnmE and two MnmG subunits. K(+) is required as a cofactor.

It localises to the cytoplasm. Functionally, exhibits a very high intrinsic GTPase hydrolysis rate. Involved in the addition of a carboxymethylaminomethyl (cmnm) group at the wobble position (U34) of certain tRNAs, forming tRNA-cmnm(5)s(2)U34. This chain is tRNA modification GTPase MnmE, found in Campylobacter jejuni (strain RM1221).